A 709-amino-acid polypeptide reads, in one-letter code: Phosphomethylpyrimidine synthase (709 aa).

Positions 1-13 are enriched in polar residues; it reads MNIRSNPDTTLPA. 2 disordered regions span residues 1–21 and 125–168; these read MNIRSNPDTTLPAVTTGPLPS and DAPA…GREQ. Substrate is bound by residues N274, M303, Y332, H368, 388-390, 429-432, and E468; these read SRG and DGLR. A Zn(2+)-binding site is contributed by H472. Y495 provides a ligand contact to substrate. H536 is a Zn(2+) binding site. [4Fe-4S] cluster-binding residues include C616, C619, and C624.

The protein belongs to the ThiC family. As to quaternary structure, homodimer. [4Fe-4S] cluster serves as cofactor.

The catalysed reaction is 5-amino-1-(5-phospho-beta-D-ribosyl)imidazole + S-adenosyl-L-methionine = 4-amino-2-methyl-5-(phosphooxymethyl)pyrimidine + CO + 5'-deoxyadenosine + formate + L-methionine + 3 H(+). The protein operates within cofactor biosynthesis; thiamine diphosphate biosynthesis. In terms of biological role, catalyzes the synthesis of the hydroxymethylpyrimidine phosphate (HMP-P) moiety of thiamine from aminoimidazole ribotide (AIR) in a radical S-adenosyl-L-methionine (SAM)-dependent reaction. The polypeptide is Phosphomethylpyrimidine synthase (Rhodopseudomonas palustris (strain BisB18)).